The following is a 452-amino-acid chain: Retrograde protein of 51 kDa (452 aa).

Basic and acidic residues predominate over residues 1-13 (MQKGAKIEDEGRQ). A disordered region spans residues 1-50 (MQKGAKIEDEGRQSRIQSRNFIIQRSDPRTRGSSVYSSRSSSYNVRSSIS). The segment at 1-75 (MQKGAKIEDE…KGNREKEKRE (75 aa)) is head. Polar residues predominate over residues 14–23 (SRIQSRNFII). Low complexity predominate over residues 33–50 (SSVYSSRSSSYNVRSSIS). Positions 72–424 (EKREMQNLNE…KLLEGEESRV (353 aa)) constitute an IF rod domain. Positions 76-111 (MQNLNERLASYIEKVHFLDAQVKKLEAENEALRNRK) are coil 1A. Residues 112 to 121 (VEDLQPIRDA) form a linker 1 region. Residues 122–259 (YENELRQARK…DLLDQLELLK (138 aa)) are coil 1B. The residue at position 156 (serine 156) is a Sulfoserine. Residues 260 to 278 (PEPIQIKGMDYADFWKSEL) are linker 12. Residues 279-424 (AKCVREINLA…KLLEGEESRV (146 aa)) form a coil 2 region. Residues 425–452 (GLRTLVEQAIGTQSKGSASLKDAIQSSS) form a tail region.

Belongs to the intermediate filament family.

The polypeptide is Retrograde protein of 51 kDa (RGP51) (Lymnaea stagnalis (Great pond snail)).